The primary structure comprises 359 residues: Probable ribonucleotide transport ATP-binding protein mkl (359 aa).

Positions 28 to 264 (IEVNGLTKSF…DEPVVRQFLN (237 aa)) constitute an ABC transporter domain. 60 to 67 (GPSGTGKS) lines the ATP pocket.

Belongs to the ABC transporter superfamily.

Functionally, not known, could be involved in the transport of ribonucleotides. The chain is Probable ribonucleotide transport ATP-binding protein mkl (mkl) from Mycobacterium bovis (strain ATCC BAA-935 / AF2122/97).